Reading from the N-terminus, the 624-residue chain is Polycystin-2-like protein 2 (624 aa).

Residues 1 to 31 are Cytoplasmic-facing; the sequence is MAEASRWHRGGASKHKLHYRKEVEITTTLQE. Residues 32 to 52 form a helical membrane-spanning segment; that stretch reads LLLYFIFLINLCILTFGMVNP. At 53–276 the chain is on the extracellular side; it reads HMYYLNKVMS…YSVKLLRYVS (224 aa). 2 N-linked (GlcNAc...) asparagine glycosylation sites follow: Asn-115 and Asn-138. Residues 277 to 297 traverse the membrane as a helical segment; that stretch reads YYDYFIASCEITFCIFLFVFT. The Cytoplasmic segment spans residues 298–314; the sequence is TQEVKKIKEFKSAYFKS. Residues 315–335 traverse the membrane as a helical segment; that stretch reads IWNWLELLLLLLCFVAVSFNT. Topologically, residues 336–360 are extracellular; that stretch reads YYNVQIFLLLGQLLKSTEKYSDFYF. The chain crosses the membrane as a helical span at residues 361–381; that stretch reads LACWHIYYNNIIAITIFFAWI. Residues 382–406 lie on the Cytoplasmic side of the membrane; sequence KIFKFISFNKTMSQLSSTLSRCVKD. Residues 407–427 traverse the membrane as a helical segment; sequence IVGFAIMFFIIFFAYAQLGFL. Over 428-469 the chain is Extracellular; the sequence is VFGSQVDDFSTFQNSIFAQFRIVLGDFNFAGIQQANPILGPI. The helical transmembrane segment at 470–490 threads the bilayer; that stretch reads YFITFIFFVFFVLLNMFLAII. Over 491 to 624 the chain is Cytoplasmic; that stretch reads NDTYSEVKAD…NQVVRKVSAL (134 aa). Positions 556–576 form a coiled coil; it reads ENEIQNAEQMKKWKERLEKKY.

This sequence belongs to the polycystin family. Interacts with TRPC1 and TRPC5. As to expression, expressed only in testis. Expressed also in brain and kidney. Expressed only in transformed lymphoblasts.

Its subcellular location is the membrane. Exhibits a lower single conductance but no spontaneous channel activity. May function as a regulator of calcium channels or a channel component involving Ca2(+) homeostasis. The protein is Polycystin-2-like protein 2 of Homo sapiens (Human).